We begin with the raw amino-acid sequence, 487 residues long: NADH-quinone oxidoreductase subunit N (487 aa).

13 helical membrane-spanning segments follow: residues 18–38 (LVPE…DLFV), 44–64 (VWTH…LATG), 84–104 (VMKT…WTYL), 116–136 (VLVL…SLLM), 169–189 (FVLG…VYGA), 211–231 (LLTG…AAPF), 242–262 (APAP…FGMA), 277–297 (WHLL…LMAI), 305–325 (MLAY…AGGG), 333–353 (MFYA…IIAL), 377–397 (AGLV…LGFW), 410–430 (DMLW…YYYL), and 457–477 (VLGV…PIMV).

The protein belongs to the complex I subunit 2 family. As to quaternary structure, NDH-1 is composed of 14 different subunits. Subunits NuoA, H, J, K, L, M, N constitute the membrane sector of the complex.

Its subcellular location is the cell inner membrane. It carries out the reaction a quinone + NADH + 5 H(+)(in) = a quinol + NAD(+) + 4 H(+)(out). Its function is as follows. NDH-1 shuttles electrons from NADH, via FMN and iron-sulfur (Fe-S) centers, to quinones in the respiratory chain. The immediate electron acceptor for the enzyme in this species is believed to be ubiquinone. Couples the redox reaction to proton translocation (for every two electrons transferred, four hydrogen ions are translocated across the cytoplasmic membrane), and thus conserves the redox energy in a proton gradient. The sequence is that of NADH-quinone oxidoreductase subunit N from Xanthomonas euvesicatoria pv. vesicatoria (strain 85-10) (Xanthomonas campestris pv. vesicatoria).